The primary structure comprises 293 residues: Protease HtpX (293 aa).

2 helical membrane passes run 4-24 (ISLFLLTNLAVMVVFGIVLSL) and 33-53 (AGLMIMAGLFGFGGAFVSLLM). H139 contributes to the Zn(2+) binding site. The active site involves E140. Residue H143 participates in Zn(2+) binding. Helical transmembrane passes span 158 to 178 (VVNTFVIFISRILAQLAAGFM) and 193 to 213 (LVYFAVSMVLELVFGVLASII). Residue E222 coordinates Zn(2+).

It belongs to the peptidase M48B family. It depends on Zn(2+) as a cofactor.

It localises to the cell inner membrane. The protein is Protease HtpX of Sodalis glossinidius (strain morsitans).